The chain runs to 75 residues: Signaling peptide TAXIMIN 1 (75 aa).

Positions 1–29 are cleaved as a signal peptide; that stretch reads MCDGDCRPLGFLLGLPFAFLSLLLSIIGV.

In terms of tissue distribution, expressed in shoot apical meristems (SAM); mostly specific to the L1 layer in the center of the meristem but also detected in the L2 layer in organ primordia. Also observed in the vasculature of seedling roots.

The protein localises to the secreted. Counteracted by the antibiotic cefotaxime during responses to light stress. In terms of biological role, signaling peptide involved in the regulation of lateral organs separation, including fruits and leaves. Involved in the perception of and response to light stress via the control of sinapoyl-malate accumulation, a UV-B protecting compound. The sequence is that of Signaling peptide TAXIMIN 1 from Arabidopsis thaliana (Mouse-ear cress).